Reading from the N-terminus, the 288-residue chain is 2-methoxy-6-polyprenyl-1,4-benzoquinol methylase, mitochondrial (288 aa).

Residues T68, D102, and S146 each contribute to the S-adenosyl-L-methionine site. The span at 260-270 shows a compositional bias: low complexity; the sequence is PITPTTSSDIP. The tract at residues 260-288 is disordered; sequence PITPTTSSDIPAQNTSEATCEVKPEPNSA. A compositionally biased stretch (basic and acidic residues) spans 279–288; sequence CEVKPEPNSA.

Belongs to the class I-like SAM-binding methyltransferase superfamily. MenG/UbiE family. In terms of assembly, component of a multi-subunit COQ enzyme complex.

It localises to the mitochondrion inner membrane. It carries out the reaction a 2-methoxy-6-(all-trans-polyprenyl)benzene-1,4-diol + S-adenosyl-L-methionine = a 5-methoxy-2-methyl-3-(all-trans-polyprenyl)benzene-1,4-diol + S-adenosyl-L-homocysteine + H(+). Its pathway is cofactor biosynthesis; ubiquinone biosynthesis. In terms of biological role, methyltransferase required for the conversion of 2-polyprenyl-6-methoxy-1,4-benzoquinol (DDMQH2) to 2-polyprenyl-3-methyl-6-methoxy-1,4-benzoquinol (DMQH2). In Leishmania donovani, this protein is 2-methoxy-6-polyprenyl-1,4-benzoquinol methylase, mitochondrial.